Consider the following 177-residue polypeptide: Trafficking regulator of GLUT4 1 (177 aa).

Residues methionine 1–leucine 105 are Cytoplasmic-facing. Serine 48, serine 87, and serine 88 each carry phosphoserine. The interval glutamate 71–threonine 92 is disordered. Low complexity predominate over residues alanine 72 to serine 88. Residues isoleucine 106 to isoleucine 126 constitute an intramembrane region (helical). The Cytoplasmic portion of the chain corresponds to serine 127–serine 153. The helical transmembrane segment at isoleucine 154–valine 174 threads the bilayer. The Extracellular segment spans residues glutamine 175–lysine 177.

This sequence belongs to the CD225/Dispanin family. In terms of assembly, interacts with SLC2A4; the interaction is required for proper SLC2A4 reacycling after insulin stimulation. In terms of tissue distribution, expressed at high levels in heart, mammary gland, adrenal gland, stomach, smooth muscle and skeletal muscle, and at lower levels in brain and lung. Strongly down-regulated in lung cancer tissues, due to hypermethylation of the corresponding locus. Expressed in adipose tissue.

The protein resides in the cell membrane. Its subcellular location is the endomembrane system. It is found in the cytoplasm. The protein localises to the perinuclear region. Functionally, regulates insulin-mediated adipose tissue glucose uptake and transport by modulation of SLC2A4 recycling. Not required for SLC2A4 membrane fusion upon an initial stimulus, but rather is necessary for proper protein recycling during prolonged insulin stimulation. In Homo sapiens (Human), this protein is Trafficking regulator of GLUT4 1.